A 503-amino-acid chain; its full sequence is Variant surface glycoprotein AnTaT 1.1 (503 aa).

A signal peptide spans 1–29 (MVTKERNAALKIVMLVASALTLHPQQALA). 2 disulfide bridges follow: cysteine 45-cysteine 172 and cysteine 154-cysteine 209. N-linked (GlcNAc...) asparagine glycosylation is present at asparagine 113. 2 N-linked (GlcNAc...) asparagine glycosylation sites follow: asparagine 419 and asparagine 432. A lipid anchor (GPI-anchor amidated aspartate) is attached at aspartate 480. The propeptide at 481–503 (SSILLTKNFALSVVSAALVALLF) is removed in mature form.

Its subcellular location is the cell membrane. Its function is as follows. VSG forms a coat on the surface of the parasite. The trypanosome evades the immune response of the host by expressing a series of antigenically distinct VSGs from an estimated 1000 VSG genes. This is Variant surface glycoprotein AnTaT 1.1 from Trypanosoma brucei brucei.